The chain runs to 295 residues: Protoheme IX farnesyltransferase (295 aa).

9 consecutive transmembrane segments (helical) span residues 8 to 28 (VTKP…FLLA), 35 to 55 (YTLF…GCVF), 84 to 104 (VSLV…WFGA), 107 to 127 (LACW…SLYM), 132 to 152 (VYGT…GYCA), 162 to 182 (LILL…IAIF), 208 to 228 (ITLY…GGYA), 233 to 253 (LVVA…GYKV), and 264 to 284 (FVFS…DFMV).

The protein belongs to the UbiA prenyltransferase family. Protoheme IX farnesyltransferase subfamily.

It localises to the cell inner membrane. It carries out the reaction heme b + (2E,6E)-farnesyl diphosphate + H2O = Fe(II)-heme o + diphosphate. It participates in porphyrin-containing compound metabolism; heme O biosynthesis; heme O from protoheme: step 1/1. Its function is as follows. Converts heme B (protoheme IX) to heme O by substitution of the vinyl group on carbon 2 of heme B porphyrin ring with a hydroxyethyl farnesyl side group. The sequence is that of Protoheme IX farnesyltransferase from Enterobacter sp. (strain 638).